We begin with the raw amino-acid sequence, 213 residues long: Thymidylate kinase (213 aa).

An ATP-binding site is contributed by 10–17; sequence GLEGAGKT.

This sequence belongs to the thymidylate kinase family.

The enzyme catalyses dTMP + ATP = dTDP + ADP. In terms of biological role, phosphorylation of dTMP to form dTDP in both de novo and salvage pathways of dTTP synthesis. This chain is Thymidylate kinase, found in Escherichia coli O7:K1 (strain IAI39 / ExPEC).